Reading from the N-terminus, the 117-residue chain is Large ribosomal subunit protein bL19 (117 aa).

This sequence belongs to the bacterial ribosomal protein bL19 family.

Its function is as follows. This protein is located at the 30S-50S ribosomal subunit interface and may play a role in the structure and function of the aminoacyl-tRNA binding site. This chain is Large ribosomal subunit protein bL19, found in Vibrio campbellii (strain ATCC BAA-1116).